A 226-amino-acid polypeptide reads, in one-letter code: Amelogenin (226 aa).

The signal sequence occupies residues 1-16 (MGTWILFACLLGTAFA). Ser32 carries the phosphoserine modification. The disordered stretch occupies residues 86 to 196 (QQHPPSHTTL…LPPQQALPPM (111 aa)). 2 stretches are compositionally biased toward low complexity: residues 88-120 (HPPS…MPVP) and 137-182 (PTSQ…SPLH). Over residues 183-192 (PIQPLPPQQA) the composition is skewed to pro residues.

The protein belongs to the amelogenin family.

The protein localises to the secreted. It is found in the extracellular space. It localises to the extracellular matrix. In terms of biological role, plays a role in the biomineralization of teeth. Seems to regulate the formation of crystallites during the secretory stage of tooth enamel development. Thought to play a major role in the structural organization and mineralization of developing enamel. In Cavia porcellus (Guinea pig), this protein is Amelogenin (AMEL).